The chain runs to 60 residues: Large ribosomal subunit protein bL32 (60 aa).

Residues 1–23 (MAVPKRKKSKSRRNMHRSHHAIK) are disordered.

The protein belongs to the bacterial ribosomal protein bL32 family.

The polypeptide is Large ribosomal subunit protein bL32 (Wolbachia sp. subsp. Brugia malayi (strain TRS)).